The sequence spans 678 residues: UvrABC system protein B (678 aa).

The region spanning 26-185 (EGLEDGEAFQ…LTTMQYTRND (160 aa)) is the Helicase ATP-binding domain. An ATP-binding site is contributed by 39–46 (GVTGSGKT). The Beta-hairpin signature appears at 92–115 (YYDYYQPEAYVPASDTYIAKDSSV). In terms of domain architecture, Helicase C-terminal spans 430–596 (QVDDLLGEIR…KLNKKITDIL (167 aa)). The tract at residues 597–630 (EDSPYAPKPGASAAKLKAAEADGEYSPQEMQRMT) is disordered. Residues 635–670 (ASEIKRMEKQMYQAAKDLDFELAAKLRDDLKRLKSS) form the UVR domain.

Belongs to the UvrB family. As to quaternary structure, forms a heterotetramer with UvrA during the search for lesions. Interacts with UvrC in an incision complex.

The protein resides in the cytoplasm. Functionally, the UvrABC repair system catalyzes the recognition and processing of DNA lesions. A damage recognition complex composed of 2 UvrA and 2 UvrB subunits scans DNA for abnormalities. Upon binding of the UvrA(2)B(2) complex to a putative damaged site, the DNA wraps around one UvrB monomer. DNA wrap is dependent on ATP binding by UvrB and probably causes local melting of the DNA helix, facilitating insertion of UvrB beta-hairpin between the DNA strands. Then UvrB probes one DNA strand for the presence of a lesion. If a lesion is found the UvrA subunits dissociate and the UvrB-DNA preincision complex is formed. This complex is subsequently bound by UvrC and the second UvrB is released. If no lesion is found, the DNA wraps around the other UvrB subunit that will check the other stand for damage. The sequence is that of UvrABC system protein B from Hydrogenovibrio crunogenus (strain DSM 25203 / XCL-2) (Thiomicrospira crunogena).